A 400-amino-acid chain; its full sequence is Apolipoprotein N-acyltransferase (400 aa).

The next 5 helical transmembrane spans lie at 16–36 (AISP…VLFV), 42–62 (FGVG…GLRY), 67–87 (FLIP…FYIG), 97–117 (FAFL…IVPE), and 123–143 (SYIG…WILF). The region spanning 181-400 (AQSAVSQDFD…AIITPFVSSR (220 aa)) is the CN hydrolase domain. Glu222 (proton acceptor) is an active-site residue. Residue Lys283 is part of the active site. The Nucleophile role is filled by Cys332. Residues 377–397 (YGSVIFHATNLSPAAIITPFV) traverse the membrane as a helical segment.

This sequence belongs to the CN hydrolase family. Apolipoprotein N-acyltransferase subfamily.

The protein localises to the cell inner membrane. It catalyses the reaction N-terminal S-1,2-diacyl-sn-glyceryl-L-cysteinyl-[lipoprotein] + a glycerophospholipid = N-acyl-S-1,2-diacyl-sn-glyceryl-L-cysteinyl-[lipoprotein] + a 2-acyl-sn-glycero-3-phospholipid + H(+). It functions in the pathway protein modification; lipoprotein biosynthesis (N-acyl transfer). In terms of biological role, catalyzes the phospholipid dependent N-acylation of the N-terminal cysteine of apolipoprotein, the last step in lipoprotein maturation. This chain is Apolipoprotein N-acyltransferase, found in Helicobacter hepaticus (strain ATCC 51449 / 3B1).